The following is a 254-amino-acid chain: UPF0246 protein CPF_2407 (254 aa).

Belongs to the UPF0246 family.

This Clostridium perfringens (strain ATCC 13124 / DSM 756 / JCM 1290 / NCIMB 6125 / NCTC 8237 / Type A) protein is UPF0246 protein CPF_2407.